The primary structure comprises 74 residues: Protein kish-B (74 aa).

The signal sequence occupies residues 1-22 (MTNVYSLDGLLVFALLFVCTCA). At 23–52 (YFRKVPRLRSWLLSEKKGVWGVFYKAAVIG) the chain is on the extracellular side. Residues 53 to 73 (SRLHLAVSISCIAMAFYVLFI) form a helical membrane-spanning segment. Lys-74 is a topological domain (cytoplasmic).

Belongs to the KISH family.

Its subcellular location is the golgi apparatus membrane. Functionally, involved in the early part of the secretory pathway. This chain is Protein kish-B (tmem167b), found in Xenopus laevis (African clawed frog).